A 140-amino-acid polypeptide reads, in one-letter code: Putative membrane protein ORF7 (140 aa).

Residues 44 to 60 (TCAVSFFALFMLIIWVL) form a helical membrane-spanning segment. A disordered region spans residues 66–118 (PEGSTTRGTDAHTQTEGSTTRGTDAHTQTEGSRDQGSMTPEADDLTRPPLGHG). Polar residues predominate over residues 68–103 (GSTTRGTDAHTQTEGSTTRGTDAHTQTEGSRDQGSM).

The protein resides in the membrane. The chain is Putative membrane protein ORF7 (ORF7) from Ictalurid herpesvirus 1 (strain Auburn) (IcHV-1).